A 448-amino-acid polypeptide reads, in one-letter code: MQVSVESTSQIERRVTVQVPAAEVDQAVATRLQETAKNVRLNGFRRGKIPLTVVRQRFGREVRNEVVGEMMRQHYVQAITQESLNPAGSPQVEPTVDEDGKDLEFVATLEVYPEFELNSIENTEIERPQAEVTEADVDQMIETLRTQHAEWEAVDRAAANGDQVTIDFEGYLGDEPFEGGAAEGHELELGSNSFIPGFEEQLVGAKAGDELEIKVTFPEDYQAAHLAGQEATFKVKVHKVAGKQLPEVDDEFIKRFGVEEGGVAAFRADVQKNMEHELSQAVTNRVKQQALEALQQANDIPVPQSLIQQETQGLKRQAAQQFGLGEDFDVSQLPDELFADQAKKRVQVGLLLAEVVKVNELDASDDEIKARVEELAQQYQQPEQVIEYYLKNDEMKNQIKSSVLEDKAVDKLLEQAQVKDVEMSYEQALQAAQQQEGAEEEAQEETSA.

A PPIase FKBP-type domain is found at 161-246 (GDQVTIDFEG…VHKVAGKQLP (86 aa)). Positions 428 to 448 (ALQAAQQQEGAEEEAQEETSA) are disordered. The segment covering 437–448 (GAEEEAQEETSA) has biased composition (acidic residues).

It belongs to the FKBP-type PPIase family. Tig subfamily.

It is found in the cytoplasm. The catalysed reaction is [protein]-peptidylproline (omega=180) = [protein]-peptidylproline (omega=0). In terms of biological role, involved in protein export. Acts as a chaperone by maintaining the newly synthesized protein in an open conformation. Functions as a peptidyl-prolyl cis-trans isomerase. The polypeptide is Trigger factor (Chromohalobacter salexigens (strain ATCC BAA-138 / DSM 3043 / CIP 106854 / NCIMB 13768 / 1H11)).